An 869-amino-acid chain; its full sequence is Programmed cell death 6-interacting protein (869 aa).

An N-acetylalanine modification is found at Ala2. Residues Ser3 to Ala392 form the BRO1 domain. Positions Thr176–Val503 are interaction with CHMP4A, CHMP4B and CHMP4C. An N6-acetyllysine modification is found at Lys215. The interval Ala383–Gln869 is interaction with SDCBP. At Thr479 the chain carries Phosphothreonine. Ser481 carries the post-translational modification Phosphoserine. The self-association stretch occupies residues Val503–Gln869. Disordered stretches follow at residues Arg715–Pro808 and Tyr838–Gln869. Positions Pro717–Pro720 are interaction with TSG101. Ser730 is subject to Phosphoserine. A compositionally biased stretch (pro residues) spans Pro739–Leu763. Thr741 is modified (phosphothreonine). The residue at position 745 (Arg745) is an Omega-N-methylarginine. The segment covering Pro764 to Pro787 has biased composition (low complexity). Pro residues-rich tracts occupy residues Pro788–Pro808 and Ala845–Pro861. Residues Gln798–Tyr807 form an interaction with CEP55 region.

As to quaternary structure, self-associates. Interacts with SH3KBP1. Interacts with PDCD6 in a calcium-dependent manner. Interacts with TSG101 in a calcium-dependent manner; PDCD6IP homooligomerization may be required for TSG101-binding. Interacts with SGSM3. Directly interacts with CHMP4A, CHMP4B and CHMP4C. Directly interacts with CEP55 in a 1:2 stoechiometry; this interaction is required for PDCD6IP targeting to the midbody. May interact with PDGFRB. Interacts with SH3GL1 and SH3GL2/endophilin-1. Forms a complex with SDCBP and SDC2. Found in a complex with F-actin, TJP1/ZO-1 and PARD3. Interacts with CD2AP. Interacts with ARRDC1. Interacts (via BRO1 domain) with the ATG12-ATG3 conjugat; this interaction is bridged by ATG12 and promotes multiple PDCD6IP-mediated functions such as endolysosomal trafficking, macroautophagy and exosome biogenesis. May be phosphorylated on tyrosine residues by activated PDGFRB. Ubiquitously expressed. High expression in choroid plexus and low expression in cerebral cortex (at protein level).

The protein resides in the cytoplasm. The protein localises to the cytosol. It localises to the melanosome. Its subcellular location is the cytoskeleton. It is found in the microtubule organizing center. The protein resides in the centrosome. The protein localises to the secreted. It localises to the extracellular exosome. Its subcellular location is the cell junction. It is found in the tight junction. The protein resides in the midbody. The protein localises to the midbody ring. Multifunctional protein involved in endocytosis, multivesicular body biogenesis, membrane repair, cytokinesis, apoptosis and maintenance of tight junction integrity. Class E VPS protein involved in concentration and sorting of cargo proteins of the multivesicular body (MVB) for incorporation into intralumenal vesicles (ILVs) that are generated by invagination and scission from the limiting membrane of the endosome. Binds to the phospholipid lysobisphosphatidic acid (LBPA) which is abundant in MVBs internal membranes. The MVB pathway requires the sequential function of ESCRT-O, -I,-II and -III complexes. The ESCRT machinery also functions in topologically equivalent membrane fission events, such as the terminal stages of cytokinesis. Adapter for a subset of ESCRT-III proteins, such as CHMP4, to function at distinct membranes. Required for completion of cytokinesis. May play a role in the regulation of both apoptosis and cell proliferation. Regulates exosome biogenesis in concert with SDC1/4 and SDCBP. By interacting with F-actin, PARD3 and TJP1 secures the proper assembly and positioning of actomyosin-tight junction complex at the apical sides of adjacent epithelial cells that defines a spatial membrane domain essential for the maintenance of epithelial cell polarity and barrier. The polypeptide is Programmed cell death 6-interacting protein (Mus musculus (Mouse)).